A 394-amino-acid chain; its full sequence is Aspergillopepsin-1 (394 aa).

Positions Met-1–Ala-20 are cleaved as a signal peptide. The propeptide at Ala-21–Ala-69 is activation peptide. Residues Tyr-85–Ala-391 form the Peptidase A1 domain. Catalysis depends on residues Asp-101 and Asp-283. Cys-319 and Cys-354 are joined by a disulfide.

This sequence belongs to the peptidase A1 family. As to quaternary structure, monomer.

It localises to the secreted. It carries out the reaction Hydrolysis of proteins with broad specificity. Generally favors hydrophobic residues in P1 and P1', but also accepts Lys in P1, which leads to activation of trypsinogen. Does not clot milk.. Secreted aspartic endopeptidase that allows assimilation of proteinaceous substrates. The scissile peptide bond is attacked by a nucleophilic water molecule activated by two aspartic residues in the active site. Shows a broad primary substrate specificity. Favors hydrophobic residues at the P1 and P1' positions, but also accepts a lysine residue in the P1 position, leading to the activation of trypsinogen and chymotrypsinogen A. This is Aspergillopepsin-1 (pepA) from Aspergillus clavatus (strain ATCC 1007 / CBS 513.65 / DSM 816 / NCTC 3887 / NRRL 1 / QM 1276 / 107).